Here is a 368-residue protein sequence, read N- to C-terminus: Nucleotide pyrophosphatase/phosphodiesterase (368 aa).

This sequence belongs to the metallophosphoesterase superfamily. In terms of assembly, monomer and homomer. Glycosylated.

It is found in the plastid. It localises to the chloroplast. In terms of biological role, hydrolyzes pyrophosphate, phosphodiester and phosphosulfate linkages of nucleotide-sugars, sulfonucleotides and nucleoside di and triphosphates. Highest activity observed with the substrates ADP-glucose and adenosine 5'-phosphosulfate. This Hordeum vulgare (Barley) protein is Nucleotide pyrophosphatase/phosphodiesterase.